Consider the following 131-residue polypeptide: Class I hydrophobin 9 (131 aa).

An N-terminal signal peptide occupies residues 1 to 23 (MFARRAISIFAFMLVALSIFAAA). 4 disulfides stabilise this stretch: cysteine 52–cysteine 112, cysteine 59–cysteine 106, cysteine 60–cysteine 93, and cysteine 113–cysteine 126. Residue asparagine 53 is glycosylated (N-linked (GlcNAc...) asparagine). N-linked (GlcNAc...) asparagine glycosylation is present at asparagine 115.

Belongs to the fungal hydrophobin family. As to quaternary structure, self-assembles to form functional amyloid fibrils called rodlets. Self-assembly into fibrillar rodlets occurs spontaneously at hydrophobic:hydrophilic interfaces and the rodlets further associate laterally to form amphipathic monolayers.

It is found in the secreted. The protein resides in the cell wall. Its function is as follows. Aerial growth, conidiation, and dispersal of filamentous fungi in the environment rely upon a capability of their secreting small amphipathic proteins called hydrophobins (HPBs) with low sequence identity. Class I can self-assemble into an outermost layer of rodlet bundles on aerial cell surfaces, conferring cellular hydrophobicity that supports fungal growth, development and dispersal; whereas Class II form highly ordered films at water-air interfaces through intermolecular interactions but contribute nothing to the rodlet structure. This is Class I hydrophobin 9 from Flammulina velutipes (Agaricus velutipes).